Reading from the N-terminus, the 494-residue chain is 4-hydroxyphenylacetate 3-monooxygenase oxygenase component (494 aa).

Substrate-binding positions include 103-107 (RSPDY) and His149. FAD-binding positions include 149-151 (HTL), 155-158 (QMNR), and Thr192. Residue 205 to 206 (ST) coordinates substrate. 455-458 (DPVR) lines the FAD pocket.

The protein belongs to the FADH(2)-utilizing monooxygenase family. In terms of assembly, 4-HPA 3-monooxygenase consists of a reductase component HpaI and an oxygenase component HpaH.

The enzyme catalyses 4-hydroxyphenylacetate + FADH2 + O2 = 3,4-dihydroxyphenylacetate + FAD + H2O + H(+). It participates in aromatic compound metabolism; 4-hydroxyphenylacetate degradation; pyruvate and succinate semialdehyde from 4-hydroxyphenylacetate: step 1/7. Its function is as follows. Utilizes FADH(2) supplied by HpaI, to catalyze the hydroxylation of 4-hydroxyphenylacetic acid, leading to the production of 3,4-dihydroxyphenylacetic acid (DHPA). This chain is 4-hydroxyphenylacetate 3-monooxygenase oxygenase component (hpaH), found in Geobacillus sp. (strain PA-9).